A 221-amino-acid chain; its full sequence is Iron-sulfur cluster repair protein YtfE (221 aa).

This sequence belongs to the RIC family. YtfE subfamily. Homodimer.

The protein resides in the cytoplasm. Functionally, di-iron-containing protein involved in the repair of iron-sulfur clusters damaged by oxidative and nitrosative stress conditions. The protein is Iron-sulfur cluster repair protein YtfE of Cronobacter sakazakii (strain ATCC BAA-894) (Enterobacter sakazakii).